The chain runs to 308 residues: tRNA pseudouridine synthase B (308 aa).

The Nucleophile role is filled by Asp-44.

The protein belongs to the pseudouridine synthase TruB family. Type 1 subfamily.

The enzyme catalyses uridine(55) in tRNA = pseudouridine(55) in tRNA. Functionally, responsible for synthesis of pseudouridine from uracil-55 in the psi GC loop of transfer RNAs. The protein is tRNA pseudouridine synthase B of Bdellovibrio bacteriovorus (strain ATCC 15356 / DSM 50701 / NCIMB 9529 / HD100).